Reading from the N-terminus, the 465-residue chain is GTPase Der (465 aa).

EngA-type G domains are found at residues 3–166 (FLVA…LNEY) and 184–358 (IHFS…ACAN). Residues 9–16 (GRANVGKS), 56–60 (DTGGI), 118–121 (NKVD), 190–197 (GRPNVGKS), 237–241 (DTAGV), and 302–305 (NKWD) each bind GTP. The 85-residue stretch at 359–443 (KKITTADATC…PIVFEFKQSE (85 aa)) folds into the KH-like domain. The disordered stretch occupies residues 446 to 465 (FADRKNKRSKDEGSKSKKVK).

The protein belongs to the TRAFAC class TrmE-Era-EngA-EngB-Septin-like GTPase superfamily. EngA (Der) GTPase family. In terms of assembly, associates with the 50S ribosomal subunit.

Its function is as follows. GTPase that plays an essential role in the late steps of ribosome biogenesis. This is GTPase Der from Francisella tularensis subsp. mediasiatica (strain FSC147).